The primary structure comprises 154 residues: UPF0260 protein HI_1355 (154 aa).

It belongs to the UPF0260 family.

This Haemophilus influenzae (strain ATCC 51907 / DSM 11121 / KW20 / Rd) protein is UPF0260 protein HI_1355.